We begin with the raw amino-acid sequence, 394 residues long: Glycerol-1-phosphate dehydrogenase [NAD(P)+] (394 aa).

NAD(+) contacts are provided by residues Asp-54, 116–120 (GTIHD), and 138–141 (TAPS). Substrate is bound at residue Asp-143. NAD(+) is bound at residue Ser-147. A substrate-binding site is contributed by Asp-190. Positions 190 and 270 each coordinate Ni(2+). His-274 is a substrate binding site. His-290 is a Ni(2+) binding site.

The protein belongs to the glycerol-1-phosphate dehydrogenase family. In terms of assembly, homodimer. Ni(2+) serves as cofactor.

Its subcellular location is the cytoplasm. It carries out the reaction sn-glycerol 1-phosphate + NAD(+) = dihydroxyacetone phosphate + NADH + H(+). It catalyses the reaction sn-glycerol 1-phosphate + NADP(+) = dihydroxyacetone phosphate + NADPH + H(+). In terms of biological role, catalyzes the NAD(P)H-dependent reduction of dihydroxyacetonephosphate (DHAP or glycerone phosphate) to glycerol 1-phosphate (G1P). The G1P thus generated is probably used for the synthesis of phosphoglycerolipids in Gram-positive bacterial species. This Bacillus velezensis (strain DSM 23117 / BGSC 10A6 / LMG 26770 / FZB42) (Bacillus amyloliquefaciens subsp. plantarum) protein is Glycerol-1-phosphate dehydrogenase [NAD(P)+].